Consider the following 344-residue polypeptide: DnaJ homolog subfamily C member 25 (344 aa).

The chain crosses the membrane as a helical span at residues 5-25 (WVLLVALSVLFLSGRAGALTE). In terms of domain architecture, J spans 33–108 (VCYDVLGVSR…ETRKDYDYML (76 aa)). 2 helical membrane passes run 134–154 (IVIL…WWSS) and 228–248 (ILLF…SWYV).

This sequence belongs to the DNAJC25 family.

It localises to the membrane. The protein is DnaJ homolog subfamily C member 25 (dnajc25) of Xenopus laevis (African clawed frog).